The following is a 276-amino-acid chain: MTQQVDRYAVFGNPIGQSKSPFIHTLFARQTSQQLTYSALQPEHGEFITAAKAFFSEGGRGCNVTAPFKEDAYQFANRLTERAELAGAVNTLKKLDDGEIIGDNTDGEGLVQDLLQHQVTLKGARVLLLGAGGAARGVIQPLLDQKPQQLVVANRTSSKAELLAEMFSSHGNIKGIGLSDVNEGFDVIINSTSSGLSGQLPEVSDVIFNSNSTVYDMVYGSGTTVFNQWALDNGVHAAYDGLGMLVGQAAESFMLWRGLRPGTKQILRELRKNLEM.

Shikimate is bound by residues 18 to 20 (SKS) and threonine 65. Lysine 69 (proton acceptor) is an active-site residue. Position 81 (glutamate 81) interacts with NADP(+). Residues asparagine 90 and aspartate 106 each coordinate shikimate. NADP(+) contacts are provided by residues 130–134 (GAGGA), 154–159 (NRTSSK), and methionine 217. Tyrosine 219 is a shikimate binding site. Glycine 241 serves as a coordination point for NADP(+).

Belongs to the shikimate dehydrogenase family. As to quaternary structure, homodimer.

The enzyme catalyses shikimate + NADP(+) = 3-dehydroshikimate + NADPH + H(+). It participates in metabolic intermediate biosynthesis; chorismate biosynthesis; chorismate from D-erythrose 4-phosphate and phosphoenolpyruvate: step 4/7. Functionally, involved in the biosynthesis of the chorismate, which leads to the biosynthesis of aromatic amino acids. Catalyzes the reversible NADPH linked reduction of 3-dehydroshikimate (DHSA) to yield shikimate (SA). This Vibrio atlanticus (strain LGP32) (Vibrio splendidus (strain Mel32)) protein is Shikimate dehydrogenase (NADP(+)).